A 750-amino-acid chain; its full sequence is Photosystem I P700 chlorophyll a apoprotein A1 (750 aa).

The next 8 membrane-spanning stretches (helical) occupy residues 70 to 93, 156 to 179, 195 to 219, 291 to 309, 346 to 369, 385 to 411, 433 to 455, and 531 to 549; these read VFSA…FHGA, LYCT…FHYH, LNHH…HVSL, TAHH…GHMY, WHAQ…HHMY, LSLF…IFMV, AIIS…LYIH, and FLVH…LILL. Residues Cys573 and Cys582 each contribute to the [4Fe-4S] cluster site. The next 2 membrane-spanning stretches (helical) occupy residues 589 to 610 and 664 to 686; these read HVFL…HFSW and LSAY…MFLF. Chlorophyll a' is bound at residue His675. Chlorophyll a-binding residues include Met683 and Tyr691. Trp692 is a binding site for phylloquinone. A helical membrane pass occupies residues 724-744; the sequence is AVGVTHYLLGGIATTWAFFLA.

It belongs to the PsaA/PsaB family. In terms of assembly, the PsaA/B heterodimer binds the P700 chlorophyll special pair and subsequent electron acceptors. PSI consists of a core antenna complex that captures photons, and an electron transfer chain that converts photonic excitation into a charge separation. The eukaryotic PSI reaction center is composed of at least 11 subunits. The cofactor is P700 is a chlorophyll a/chlorophyll a' dimer, A0 is one or more chlorophyll a, A1 is one or both phylloquinones and FX is a shared 4Fe-4S iron-sulfur center..

It localises to the plastid. It is found in the chloroplast thylakoid membrane. It carries out the reaction reduced [plastocyanin] + hnu + oxidized [2Fe-2S]-[ferredoxin] = oxidized [plastocyanin] + reduced [2Fe-2S]-[ferredoxin]. In terms of biological role, psaA and PsaB bind P700, the primary electron donor of photosystem I (PSI), as well as the electron acceptors A0, A1 and FX. PSI is a plastocyanin-ferredoxin oxidoreductase, converting photonic excitation into a charge separation, which transfers an electron from the donor P700 chlorophyll pair to the spectroscopically characterized acceptors A0, A1, FX, FA and FB in turn. Oxidized P700 is reduced on the lumenal side of the thylakoid membrane by plastocyanin. This chain is Photosystem I P700 chlorophyll a apoprotein A1, found in Helianthus annuus (Common sunflower).